A 194-amino-acid polypeptide reads, in one-letter code: Peptidyl-tRNA hydrolase (194 aa).

Tyrosine 17 contacts tRNA. The active-site Proton acceptor is histidine 22. TRNA contacts are provided by tyrosine 68, asparagine 70, and asparagine 116.

This sequence belongs to the PTH family. Monomer.

Its subcellular location is the cytoplasm. The enzyme catalyses an N-acyl-L-alpha-aminoacyl-tRNA + H2O = an N-acyl-L-amino acid + a tRNA + H(+). Hydrolyzes ribosome-free peptidyl-tRNAs (with 1 or more amino acids incorporated), which drop off the ribosome during protein synthesis, or as a result of ribosome stalling. Its function is as follows. Catalyzes the release of premature peptidyl moieties from peptidyl-tRNA molecules trapped in stalled 50S ribosomal subunits, and thus maintains levels of free tRNAs and 50S ribosomes. This is Peptidyl-tRNA hydrolase from Pseudoalteromonas translucida (strain TAC 125).